A 739-amino-acid chain; its full sequence is Endoglucanase F (739 aa).

The N-terminal stretch at 1–27 (MKKILAFLLTVALVAVVAIPQAVVSFA) is a signal peptide. The catalytic stretch occupies residues 28–470 (ADFNYGEALQ…AKMYEKYGGE (443 aa)). Aspartate 84 serves as the catalytic Nucleophile. Catalysis depends on residues histidine 400, aspartate 438, and glutamate 447. One can recognise a CBM3 domain in the interval 480–639 (TPGEEFYVEA…NVRVWGKVPD (160 aa)). The Dockerin domain maps to 664 to 737 (PGIMLGDVNF…ILKLIEKFPA (74 aa)).

This sequence belongs to the glycosyl hydrolase 9 (cellulase E) family. It depends on Ca(2+) as a cofactor.

The enzyme catalyses Endohydrolysis of (1-&gt;4)-beta-D-glucosidic linkages in cellulose, lichenin and cereal beta-D-glucans.. Its function is as follows. This enzyme catalyzes the endohydrolysis of 1,4-beta-glucosidic linkages in cellulose, lichenin and cereal beta-D-glucans. This Acetivibrio thermocellus (strain ATCC 27405 / DSM 1237 / JCM 9322 / NBRC 103400 / NCIMB 10682 / NRRL B-4536 / VPI 7372) (Clostridium thermocellum) protein is Endoglucanase F (celF).